The primary structure comprises 155 residues: Large ribosomal subunit protein uL22 (155 aa).

The protein belongs to the universal ribosomal protein uL22 family. In terms of assembly, part of the 50S ribosomal subunit.

Its function is as follows. This protein binds specifically to 23S rRNA. It makes multiple contacts with different domains of the 23S rRNA in the assembled 50S subunit and ribosome. The globular domain of the protein is located near the polypeptide exit tunnel on the outside of the subunit, while an extended beta-hairpin is found that lines the wall of the exit tunnel in the center of the 70S ribosome. This Archaeoglobus fulgidus (strain ATCC 49558 / DSM 4304 / JCM 9628 / NBRC 100126 / VC-16) protein is Large ribosomal subunit protein uL22.